A 461-amino-acid chain; its full sequence is D-phenylhydantoinase (461 aa).

A divalent metal cation-binding residues include His59, His61, and Lys151. At Lys151 the chain carries N6-carboxylysine. Residue Tyr156 coordinates substrate. The a divalent metal cation site is built by His182 and His239. Position 286 (Ser286) interacts with substrate. An a divalent metal cation-binding site is contributed by Asp313. Asn335 contributes to the substrate binding site.

Belongs to the metallo-dependent hydrolases superfamily. Hydantoinase/dihydropyrimidinase family. Homotetramer. The cofactor is a divalent metal cation. Post-translationally, carboxylation allows a single lysine to coordinate two divalent metal cations.

The catalysed reaction is D-5-phenylhydantoin + H2O = N-carbamoyl-D-phenylglycine + H(+). Catalyzes the stereospecific hydrolysis of the cyclic amide bond of D-hydantoin derivatives with an aromatic side chains at the 5'-position. Has no activity on dihydropyrimidines. The physiological function is unknown. In Shigella boydii serotype 4 (strain Sb227), this protein is D-phenylhydantoinase.